Reading from the N-terminus, the 1045-residue chain is Bifunctional glutamine synthetase adenylyltransferase/adenylyl-removing enzyme (1045 aa).

The adenylyl removase stretch occupies residues 1-527; sequence MSGPLRSERK…LHSQLFYRPL (527 aa). Positions 533–1045 are adenylyl transferase; the sequence is NLSADAIRLS…GVDSMEQREF (513 aa).

The protein belongs to the GlnE family. It depends on Mg(2+) as a cofactor.

It catalyses the reaction [glutamine synthetase]-O(4)-(5'-adenylyl)-L-tyrosine + phosphate = [glutamine synthetase]-L-tyrosine + ADP. The catalysed reaction is [glutamine synthetase]-L-tyrosine + ATP = [glutamine synthetase]-O(4)-(5'-adenylyl)-L-tyrosine + diphosphate. Functionally, involved in the regulation of glutamine synthetase GlnA, a key enzyme in the process to assimilate ammonia. When cellular nitrogen levels are high, the C-terminal adenylyl transferase (AT) inactivates GlnA by covalent transfer of an adenylyl group from ATP to specific tyrosine residue of GlnA, thus reducing its activity. Conversely, when nitrogen levels are low, the N-terminal adenylyl removase (AR) activates GlnA by removing the adenylyl group by phosphorolysis, increasing its activity. The regulatory region of GlnE binds the signal transduction protein PII (GlnB) which indicates the nitrogen status of the cell. This Corynebacterium glutamicum (strain ATCC 13032 / DSM 20300 / JCM 1318 / BCRC 11384 / CCUG 27702 / LMG 3730 / NBRC 12168 / NCIMB 10025 / NRRL B-2784 / 534) protein is Bifunctional glutamine synthetase adenylyltransferase/adenylyl-removing enzyme.